The following is a 127-amino-acid chain: 3-aminoacrylate deaminase RutC (127 aa).

The protein belongs to the RutC family.

It catalyses the reaction (Z)-3-aminoacrylate + H2O + H(+) = 3-oxopropanoate + NH4(+). Involved in pyrimidine catabolism. Catalyzes the deamination of 3-aminoacrylate to malonic semialdehyde, a reaction that can also occur spontaneously. RutC may facilitate the reaction and modulate the metabolic fitness, rather than catalyzing essential functions. The protein is 3-aminoacrylate deaminase RutC of Pseudomonas syringae pv. syringae (strain B728a).